Here is a 906-residue protein sequence, read N- to C-terminus: MLSILKKLFGTANDRTVKKLFSEITKINSLEPAIQKLSDEELKNKTVEFKEKLKNGATLDDIVYEAFAVVREAAKRVCGMRHFDVQLIGGLILHRGMITEMRTGEGKTLVATLPAYLNALTGKGVHVVTVNDYLARRDSAAMGKIYNFLGLSVGCIVGGMPDEVKRAAYNADITHATNNELGFDYLRDNMKYSLQERVLRPFNFAIIDEVDSILIDEARTPLVISGPVNDNAELYGKIDKIVRLLNASDFEKDEKLKTINLTETGITHIESLLSKENIIKPDTSLYDFENLTLVHYINQALRAHNMFTVNVDYLVREGKVMIIDEFTGRVMEGRRYSEGLHQALEAKENVKIQNENQTLASITFQNYFRNYPKLSGMTGTAMTEAPELKDIYNLDVVAVPTHNKVTRLDLDDEIYGSKKEKYDAILKLIRDCYDRGQPILVGTISIEKSEELSSVLNKENIPHKVLNAKFHEQEAFIIAQAGRFKAVTIATNMAGRGTDIMLGGNPEMLIEQLDKEHNYEAKIAEIKAQIAEEKKQVIEAGGLFVIGTERHESRRIDNQLRGRSGRQGDPGKTKFFLSLDDDLMRIFASDRISGVLRTLGLKDGEAIHHPMISRSLEKAQQKVEGHNYEMRKNLLRFDDVMNDQRKIIYEQRTEIIKSKDSHGFLNSTTEELAKKIVLTFMPVGSYREDWDIENLSVELHRVFSIKFDHNVVSKNDVTEEEITKTVIQMAHDIYKSKEEAYSSELMHNAVKYILLTTLDQVWKDHLYSLDHLRQGISLRAYGQKDPLSEYKREAFNLFEQMLNNLKELFIQTVYHFHIDLKNVQKEDVSLEYKKLQKNMCESREDPAFSKYNAGSSLETDLKPVVSRIDPKDRNPDDPTSWGRVSRNELCPCGSGKKYKYCHGANE.

ATP contacts are provided by residues Gln-86, 104 to 108, and Asp-499; that span reads GEGKT. The interval 863–887 is disordered; it reads PVVSRIDPKDRNPDDPTSWGRVSRN. 4 residues coordinate Zn(2+): Cys-890, Cys-892, Cys-901, and His-902.

Belongs to the SecA family. As to quaternary structure, monomer and homodimer. Part of the essential Sec protein translocation apparatus which comprises SecA, SecYEG and auxiliary proteins SecDF-YajC and YidC. Requires Zn(2+) as cofactor.

It is found in the cell inner membrane. It localises to the cytoplasm. The catalysed reaction is ATP + H2O + cellular proteinSide 1 = ADP + phosphate + cellular proteinSide 2.. Part of the Sec protein translocase complex. Interacts with the SecYEG preprotein conducting channel. Has a central role in coupling the hydrolysis of ATP to the transfer of proteins into and across the cell membrane, serving both as a receptor for the preprotein-SecB complex and as an ATP-driven molecular motor driving the stepwise translocation of polypeptide chains across the membrane. This is Protein translocase subunit SecA from Rickettsia rickettsii (strain Iowa).